A 402-amino-acid polypeptide reads, in one-letter code: Multidrug resistance protein MdtH (402 aa).

Residues 1–12 (MSRVSQARNLGK) are Cytoplasmic-facing. A helical membrane pass occupies residues 13–33 (YFLLIDNMLVVLGFFVVFPLI). Topologically, residues 34–98 (SIRFVDQMGW…GFATMGIAHE (65 aa)) are periplasmic. The chain crosses the membrane as a helical span at residues 99 to 116 (PWLLWFSCLLSGLGGTLF). The Cytoplasmic segment spans residues 117-138 (DPPRSALVVKLIRPQQRGRFFS). A helical membrane pass occupies residues 139-159 (LLMMQDSASAVIGALLGSWLL). The Periplasmic segment spans residues 160–164 (QYDFR). The helical transmembrane segment at 165 to 185 (LVCATGPVLFVLCAAFNAWLL) threads the bilayer. At 186 to 213 (PAWKLSTVRTPVREGMTRVMRDKRFVTY) the chain is on the cytoplasmic side. A helical membrane pass occupies residues 214–234 (VLTLAGYYMLAVQVMLMLPIM). The Periplasmic segment spans residues 235-243 (VNDVAGAPS). A helical transmembrane segment spans residues 244 to 264 (AVKWMYAIEACLSLTLLYPIA). Topologically, residues 265–276 (RWSEKHFRLEHR) are cytoplasmic. A helical membrane pass occupies residues 277-297 (LMAGLLIMSLSMMPVGMVSGL). Residues 298–299 (QQ) are Periplasmic-facing. A helical transmembrane segment spans residues 300–320 (LFTLICLFYIGSIIAEPARET). Topologically, residues 321–339 (LSASLADARARGSYMGFSR) are cytoplasmic. The helical transmembrane segment at 340–360 (LGLAIGGAIGYIGGGWLFDLG) threads the bilayer. Topologically, residues 361 to 367 (KSAHQPE) are periplasmic. Residues 368–388 (LPWMMLGIIGIFTFLALGWQF) form a helical membrane-spanning segment. Residues 389–402 (SQKRAARRLLERDA) are Cytoplasmic-facing.

The protein belongs to the major facilitator superfamily. DHA1 family. MdtH (TC 2.A.1.2.21) subfamily.

The protein resides in the cell inner membrane. This chain is Multidrug resistance protein MdtH, found in Shigella flexneri serotype 5b (strain 8401).